Consider the following 345-residue polypeptide: Holliday junction branch migration complex subunit RuvB (345 aa).

The tract at residues 1-22 is disordered; it reads MIETDALSGGTPRRLVTQQPLS. The segment at 4–193 is large ATPase domain (RuvB-L); the sequence is TDALSGGTPR…FGIVARLEFY (190 aa). Residues Leu32, Arg33, Gly74, Lys77, Thr78, Thr79, 140-142, Arg183, Tyr193, and Arg230 each bind ATP; that span reads EDY. Thr78 is a binding site for Mg(2+). Positions 194–264 are small ATPAse domain (RuvB-S); that stretch reads TPEELTRIVR…VADAALSMLD (71 aa). A head domain (RuvB-H) region spans residues 267–345; sequence PAGLDVMDRK…HFGFVPPERV (79 aa). Positions 322 and 327 each coordinate DNA.

This sequence belongs to the RuvB family. As to quaternary structure, homohexamer. Forms an RuvA(8)-RuvB(12)-Holliday junction (HJ) complex. HJ DNA is sandwiched between 2 RuvA tetramers; dsDNA enters through RuvA and exits via RuvB. An RuvB hexamer assembles on each DNA strand where it exits the tetramer. Each RuvB hexamer is contacted by two RuvA subunits (via domain III) on 2 adjacent RuvB subunits; this complex drives branch migration. In the full resolvosome a probable DNA-RuvA(4)-RuvB(12)-RuvC(2) complex forms which resolves the HJ.

The protein resides in the cytoplasm. It catalyses the reaction ATP + H2O = ADP + phosphate + H(+). In terms of biological role, the RuvA-RuvB-RuvC complex processes Holliday junction (HJ) DNA during genetic recombination and DNA repair, while the RuvA-RuvB complex plays an important role in the rescue of blocked DNA replication forks via replication fork reversal (RFR). RuvA specifically binds to HJ cruciform DNA, conferring on it an open structure. The RuvB hexamer acts as an ATP-dependent pump, pulling dsDNA into and through the RuvAB complex. RuvB forms 2 homohexamers on either side of HJ DNA bound by 1 or 2 RuvA tetramers; 4 subunits per hexamer contact DNA at a time. Coordinated motions by a converter formed by DNA-disengaged RuvB subunits stimulates ATP hydrolysis and nucleotide exchange. Immobilization of the converter enables RuvB to convert the ATP-contained energy into a lever motion, pulling 2 nucleotides of DNA out of the RuvA tetramer per ATP hydrolyzed, thus driving DNA branch migration. The RuvB motors rotate together with the DNA substrate, which together with the progressing nucleotide cycle form the mechanistic basis for DNA recombination by continuous HJ branch migration. Branch migration allows RuvC to scan DNA until it finds its consensus sequence, where it cleaves and resolves cruciform DNA. The chain is Holliday junction branch migration complex subunit RuvB from Laribacter hongkongensis (strain HLHK9).